The chain runs to 173 residues: Crossover junction endodeoxyribonuclease RuvC (173 aa).

Active-site residues include aspartate 8, glutamate 67, and aspartate 139. Positions 8, 67, and 139 each coordinate Mg(2+).

Belongs to the RuvC family. In terms of assembly, homodimer which binds Holliday junction (HJ) DNA. The HJ becomes 2-fold symmetrical on binding to RuvC with unstacked arms; it has a different conformation from HJ DNA in complex with RuvA. In the full resolvosome a probable DNA-RuvA(4)-RuvB(12)-RuvC(2) complex forms which resolves the HJ. The cofactor is Mg(2+).

It localises to the cytoplasm. The enzyme catalyses Endonucleolytic cleavage at a junction such as a reciprocal single-stranded crossover between two homologous DNA duplexes (Holliday junction).. Its function is as follows. The RuvA-RuvB-RuvC complex processes Holliday junction (HJ) DNA during genetic recombination and DNA repair. Endonuclease that resolves HJ intermediates. Cleaves cruciform DNA by making single-stranded nicks across the HJ at symmetrical positions within the homologous arms, yielding a 5'-phosphate and a 3'-hydroxyl group; requires a central core of homology in the junction. The consensus cleavage sequence is 5'-(A/T)TT(C/G)-3'. Cleavage occurs on the 3'-side of the TT dinucleotide at the point of strand exchange. HJ branch migration catalyzed by RuvA-RuvB allows RuvC to scan DNA until it finds its consensus sequence, where it cleaves and resolves the cruciform DNA. The chain is Crossover junction endodeoxyribonuclease RuvC from Shewanella sp. (strain MR-4).